Here is a 353-residue protein sequence, read N- to C-terminus: Rhodopsin (353 aa).

The Extracellular portion of the chain corresponds to 1–36; that stretch reads MNGTEGPYFYVPMVNTSGIVRSPYEYPQYYLVNPAA. N-linked (GlcNAc...) asparagine glycans are attached at residues N2 and N15. Residues 37–61 form a helical membrane-spanning segment; it reads YAALGAYMFLLILVGFPINFLTLYV. Topologically, residues 62-73 are cytoplasmic; the sequence is TIEHKKLRTPLN. The helical transmembrane segment at 74 to 96 threads the bilayer; it reads YILLNLAVADLFMVFGGFTTTMY. Topologically, residues 97-110 are extracellular; the sequence is TSMHGYFVLGRLGC. The cysteines at positions 110 and 187 are disulfide-linked. A helical transmembrane segment spans residues 111–133; sequence NIEGFFATLGGEIALWSLVVLAI. The 'Ionic lock' involved in activated form stabilization signature appears at 134–136; the sequence is ERW. Residues 134-152 are Cytoplasmic-facing; that stretch reads ERWVVVCKPISNFRFGENH. Residues 153–173 traverse the membrane as a helical segment; the sequence is AIMGLAFTWLMAMACAAPPLV. Topologically, residues 174–202 are extracellular; sequence GWSRYIPEGMQCSCGIDYYTRAEGFNNES. An N-linked (GlcNAc...) asparagine glycan is attached at N200. A helical membrane pass occupies residues 203–224; that stretch reads FVIYMFVCHFLIPLMVVFFCYG. The Cytoplasmic segment spans residues 225–252; that stretch reads RLLCAVKEAAAAQQESETTQRAEREVTR. Residues 253–274 traverse the membrane as a helical segment; sequence MVVIMVIAFLICWCPYAGVAWW. The Extracellular segment spans residues 275-286; that stretch reads IFTHQGSDFGPV. A helical membrane pass occupies residues 287–308; the sequence is FMTIPAFFAKSSSIYNPMIYIC. At K296 the chain carries N6-(retinylidene)lysine. At 309 to 353 the chain is on the cytoplasmic side; it reads LNKQFRHCMITTLCCGKNPFEEEEGASTASKTEASSVSSSSVSPA. Residues C322 and C323 are each lipidated (S-palmitoyl cysteine). The interval 331–353 is disordered; the sequence is EEGASTASKTEASSVSSSSVSPA. The segment covering 334-353 has biased composition (low complexity); sequence ASTASKTEASSVSSSSVSPA.

It belongs to the G-protein coupled receptor 1 family. Opsin subfamily. Post-translationally, phosphorylated on some or all of the serine and threonine residues present in the C-terminal region. In terms of processing, contains one covalently linked retinal chromophore.

It localises to the membrane. Its subcellular location is the cell projection. It is found in the cilium. The protein localises to the photoreceptor outer segment. In terms of biological role, photoreceptor required for image-forming vision at low light intensity. While most salt water fish species use retinal as chromophore, most freshwater fish use 3-dehydroretinal, or a mixture of retinal and 3-dehydroretinal. Light-induced isomerization of 11-cis to all-trans retinal triggers a conformational change that activates signaling via G-proteins. Subsequent receptor phosphorylation mediates displacement of the bound G-protein alpha subunit by arrestin and terminates signaling. This chain is Rhodopsin (rho), found in Lithognathus mormyrus (Striped seabream).